A 307-amino-acid polypeptide reads, in one-letter code: Serine/threonine-protein phosphatase 4 catalytic subunit (307 aa).

Ala2 bears the N-acetylalanine mark. Residues Asp54, His56, Asp82, and Asn114 each contribute to the Mn(2+) site. The active-site Proton donor is the His115. His164 and His238 together coordinate Mn(2+). Leu307 is subject to Leucine methyl ester.

It belongs to the PPP phosphatase family. PP-4 (PP-X) subfamily. In terms of assembly, serine/threonine-protein phosphatase 4 (PP4) occurs in different assemblies of the catalytic and one or more regulatory subunits. Component of the PP4 complexes PPP4C-PPP4R1, PPP4C-PPP4R2, PPP4C-PPP4R2-PPP4R3A, PPP4C-PPP4R2-PPP4R3B and PPP4C-PPP4R4. The PPP4C-PPP4R2 complex appears to be a tetramer composed of 2 molecules of PPP4C and 2 molecules of PPP4R2. Interacts with REL, NFKB1/p50 and RELA. Interacts with SMN1 and GEMIN4. Interacts with IRS4 (phosphorylated). Interacts with SMEK1/PPP4R3A; the interaction requires PP4R2. Interacts with HDAC3. Mn(2+) serves as cofactor. Methylation at the C-terminal Leu-307 is critical for interactions with regulatory subunits and functions in DNA repair.

Its subcellular location is the cytoplasm. The protein localises to the nucleus. It localises to the cytoskeleton. The protein resides in the microtubule organizing center. It is found in the centrosome. The catalysed reaction is O-phospho-L-seryl-[protein] + H2O = L-seryl-[protein] + phosphate. It catalyses the reaction O-phospho-L-threonyl-[protein] + H2O = L-threonyl-[protein] + phosphate. In terms of biological role, protein phosphatase that is involved in many processes such as microtubule organization at centrosomes, maturation of spliceosomal snRNPs, apoptosis, DNA repair, tumor necrosis factor (TNF)-alpha signaling, activation of c-Jun N-terminal kinase MAPK8, regulation of histone acetylation, DNA damage checkpoint signaling, NF-kappa-B activation and cell migration. The PPP4C-PPP4R1 PP4 complex may play a role in dephosphorylation and regulation of HDAC3. The PPP4C-PPP4R2-PPP4R3A PP4 complex specifically dephosphorylates H2AX phosphorylated on Ser-140 (gamma-H2AX) generated during DNA replication and required for DNA DSB repair. Dephosphorylates NDEL1 at CDK1 phosphorylation sites and negatively regulates CDK1 activity in interphase. In response to DNA damage, catalyzes RPA2 dephosphorylation, an essential step for DNA repair since it allows the efficient RPA2-mediated recruitment of RAD51 to chromatin. The polypeptide is Serine/threonine-protein phosphatase 4 catalytic subunit (Ppp4c) (Rattus norvegicus (Rat)).